We begin with the raw amino-acid sequence, 162 residues long: Ribonuclease H (162 aa).

Residues 6–154 (DMKRVEIFTD…ADRLANQGVE (149 aa)) form the RNase H type-1 domain. Mg(2+) is bound by residues D15, E53, D82, and D146.

The protein belongs to the RNase H family. In terms of assembly, monomer. The cofactor is Mg(2+).

It localises to the cytoplasm. It catalyses the reaction Endonucleolytic cleavage to 5'-phosphomonoester.. Functionally, endonuclease that specifically degrades the RNA of RNA-DNA hybrids. This is Ribonuclease H from Nitrosomonas eutropha (strain DSM 101675 / C91 / Nm57).